A 483-amino-acid chain; its full sequence is Zinc metalloproteinase/disintegrin (483 aa).

The N-terminal stretch at 1 to 20 (MIQVLLVTLCLAAFPYQGSS) is a signal peptide. Residues 21 to 190 (IILESGNVND…KKASQLNLTP (170 aa)) constitute a propeptide that is removed on maturation. The Peptidase M12B domain maps to 198-394 (RYIELVVVAD…HNPQCMLNEP (197 aa)). Residues E201 and D285 each contribute to the Ca(2+) site. Intrachain disulfides connect C309–C389, C349–C373, and C351–C356. H334 lines the Zn(2+) pocket. The active site involves E335. Residues H338 and H344 each contribute to the Zn(2+) site. The Ca(2+) site is built by C389 and N392. A propeptide spanning residues 395–418 (LRTDIVSTPVSGNELLETGEESDF) is cleaved from the precursor. The Disintegrin domain maps to 402–483 (TPVSGNELLE…AGCPRNPFHA (82 aa)). 4 disulfides stabilise this stretch: C425-C448, C439-C445, C444-C469, and C457-C476. The short motif at 461–463 (RGD) is the Cell attachment site element.

The protein belongs to the venom metalloproteinase (M12B) family. P-II subfamily. P-IId sub-subfamily. In terms of assembly, homodimer; disulfide-linked (disintegrin). Zn(2+) serves as cofactor. Expressed by the venom gland.

The protein localises to the secreted. Functionally, impairs hemostasis in the envenomed animal. This protein has not been identified in the venom. In terms of biological role, inhibits ADP-induced platelet aggregation. Binds and inhibits integrins GPIIb/GPIIIa (ITGA2B/ITGB3), alpha-5/beta-1 (ITGA5/ITGB1), alpha-V/beta-3 (ITGAV/ITGB3), and alpha-V/beta-5 (ITGAV/ITGB5). It blocks cancer cell adhesion (tested on human breast cancer cell line MDA-MB-435) to fibronectin and vitronectin and thus prevents invasion of cancer cells. The chain is Zinc metalloproteinase/disintegrin from Agkistrodon contortrix contortrix (Southern copperhead).